The primary structure comprises 224 residues: ATP-dependent dethiobiotin synthetase BioD (224 aa).

Residue 12-17 (GVGKTF) participates in ATP binding. Thr-16 is a binding site for Mg(2+). Lys-37 is a catalytic residue. Substrate is bound at residue Thr-41. Residues Asn-52, 107–110 (EGAG), 167–168 (GS), 197–199 (PEG), and Glu-204 contribute to the ATP site. Mg(2+) contacts are provided by Asn-52 and Glu-107.

This sequence belongs to the dethiobiotin synthetase family. In terms of assembly, homodimer. The cofactor is Mg(2+).

The protein resides in the cytoplasm. It carries out the reaction (7R,8S)-7,8-diammoniononanoate + CO2 + ATP = (4R,5S)-dethiobiotin + ADP + phosphate + 3 H(+). The protein operates within cofactor biosynthesis; biotin biosynthesis; biotin from 7,8-diaminononanoate: step 1/2. In terms of biological role, catalyzes a mechanistically unusual reaction, the ATP-dependent insertion of CO2 between the N7 and N8 nitrogen atoms of 7,8-diaminopelargonic acid (DAPA, also called 7,8-diammoniononanoate) to form a ureido ring. The protein is ATP-dependent dethiobiotin synthetase BioD of Corynebacterium glutamicum (strain ATCC 13032 / DSM 20300 / JCM 1318 / BCRC 11384 / CCUG 27702 / LMG 3730 / NBRC 12168 / NCIMB 10025 / NRRL B-2784 / 534).